Consider the following 274-residue polypeptide: 2,3,4,5-tetrahydropyridine-2,6-dicarboxylate N-succinyltransferase (274 aa).

This sequence belongs to the transferase hexapeptide repeat family.

The protein resides in the cytoplasm. It catalyses the reaction (S)-2,3,4,5-tetrahydrodipicolinate + succinyl-CoA + H2O = (S)-2-succinylamino-6-oxoheptanedioate + CoA. It functions in the pathway amino-acid biosynthesis; L-lysine biosynthesis via DAP pathway; LL-2,6-diaminopimelate from (S)-tetrahydrodipicolinate (succinylase route): step 1/3. The sequence is that of 2,3,4,5-tetrahydropyridine-2,6-dicarboxylate N-succinyltransferase from Yersinia pseudotuberculosis serotype IB (strain PB1/+).